Reading from the N-terminus, the 271-residue chain is Energy-coupling factor transporter ATP-binding protein EcfA (271 aa).

The region spanning 2-231 is the ABC transporter domain; sequence ISIQNLTFYY…PLFLQQYKLN (230 aa). Residue 34-41 coordinates ATP; sequence GHNGSGKS.

The protein belongs to the ABC transporter superfamily. Energy-coupling factor EcfA family. In terms of assembly, forms a stable energy-coupling factor (ECF) transporter complex composed of 2 membrane-embedded substrate-binding proteins (S component), 2 ATP-binding proteins (A component) and 2 transmembrane proteins (T component).

It is found in the cell membrane. ATP-binding (A) component of a common energy-coupling factor (ECF) ABC-transporter complex. Unlike classic ABC transporters this ECF transporter provides the energy necessary to transport a number of different substrates. This Onion yellows phytoplasma (strain OY-M) protein is Energy-coupling factor transporter ATP-binding protein EcfA.